We begin with the raw amino-acid sequence, 101 residues long: Putative membrane protein insertion efficiency factor (101 aa).

The protein belongs to the UPF0161 family.

It localises to the cell inner membrane. Its function is as follows. Could be involved in insertion of integral membrane proteins into the membrane. The sequence is that of Putative membrane protein insertion efficiency factor from Methylobacterium sp. (strain 4-46).